We begin with the raw amino-acid sequence, 331 residues long: MPCPTGVTRCSAGVSSLARCLHTCPVLEGVTKANLSKLRKKTGFTFVNCRKALEKFENDLEQAEKWLKEQAQKEGWAKATKLQDRQTAQGLVGVAQEGTMATMVEVNCETDFVARNPKFRQLVTQVAMATLGDVKAHPQWTLGWLKALHTGEELKQLQIGDTTLGDLTALTIGTLGENIQIRRAMYYSVPPIPTKHVGVYVHAPVAGTTGGQSGSCALGKYGALVAFRRKNTEFQNFNAAELGRRLGQHVVGMSPLTVGEMPEVREEEGEKKDGDKQDEEERSTDSDEDETQMLRQTFLLDPTMTVGEMTRQQGIELLDFVRFECGEVEES.

Residues 254–295 (SPLTVGEMPEVREEEGEKKDGDKQDEEERSTDSDEDETQMLR) form a disordered region. The segment covering 262 to 275 (PEVREEEGEKKDGD) has biased composition (basic and acidic residues). Residues 276-291 (KQDEEERSTDSDEDET) are compositionally biased toward acidic residues.

This sequence belongs to the EF-Ts family.

It localises to the mitochondrion. Associates with the EF-Tu.GDP complex and induces the exchange of GDP to GTP. It remains bound to the aminoacyl-tRNA.EF-Tu.GTP complex up to the GTP hydrolysis stage on the ribosome. The protein is Elongation factor Ts, mitochondrial of Branchiostoma floridae (Florida lancelet).